The following is a 394-amino-acid chain: Carbamoyltransferase HypF homolog (394 aa).

Belongs to the carbamoyltransferase HypF family.

In Cupriavidus necator (strain ATCC 17699 / DSM 428 / KCTC 22496 / NCIMB 10442 / H16 / Stanier 337) (Ralstonia eutropha), this protein is Carbamoyltransferase HypF homolog (hypF1).